The chain runs to 313 residues: Porphobilinogen deaminase (313 aa).

Cys242 is modified (S-(dipyrrolylmethanemethyl)cysteine).

This sequence belongs to the HMBS family. In terms of assembly, monomer. It depends on dipyrromethane as a cofactor.

The enzyme catalyses 4 porphobilinogen + H2O = hydroxymethylbilane + 4 NH4(+). The protein operates within porphyrin-containing compound metabolism; protoporphyrin-IX biosynthesis; coproporphyrinogen-III from 5-aminolevulinate: step 2/4. Tetrapolymerization of the monopyrrole PBG into the hydroxymethylbilane pre-uroporphyrinogen in several discrete steps. The polypeptide is Porphobilinogen deaminase (Proteus mirabilis (strain HI4320)).